Here is a 145-residue protein sequence, read N- to C-terminus: D-aminoacyl-tRNA deacylase (145 aa).

Residues 137 to 138 carry the Gly-cisPro motif, important for rejection of L-amino acids motif; the sequence is GP.

Belongs to the DTD family. As to quaternary structure, homodimer.

It is found in the cytoplasm. The catalysed reaction is glycyl-tRNA(Ala) + H2O = tRNA(Ala) + glycine + H(+). It carries out the reaction a D-aminoacyl-tRNA + H2O = a tRNA + a D-alpha-amino acid + H(+). Functionally, an aminoacyl-tRNA editing enzyme that deacylates mischarged D-aminoacyl-tRNAs. Also deacylates mischarged glycyl-tRNA(Ala), protecting cells against glycine mischarging by AlaRS. Acts via tRNA-based rather than protein-based catalysis; rejects L-amino acids rather than detecting D-amino acids in the active site. By recycling D-aminoacyl-tRNA to D-amino acids and free tRNA molecules, this enzyme counteracts the toxicity associated with the formation of D-aminoacyl-tRNA entities in vivo and helps enforce protein L-homochirality. This Lactobacillus helveticus (strain DPC 4571) protein is D-aminoacyl-tRNA deacylase.